The sequence spans 303 residues: 5-dehydro-4-deoxyglucarate dehydratase (303 aa).

The protein belongs to the DapA family.

It carries out the reaction 5-dehydro-4-deoxy-D-glucarate + H(+) = 2,5-dioxopentanoate + CO2 + H2O. Its pathway is carbohydrate acid metabolism; D-glucarate degradation; 2,5-dioxopentanoate from D-glucarate: step 2/2. In Pseudomonas putida (Arthrobacter siderocapsulatus), this protein is 5-dehydro-4-deoxyglucarate dehydratase.